Consider the following 92-residue polypeptide: Small ribosomal subunit protein bS20 (92 aa).

The protein belongs to the bacterial ribosomal protein bS20 family.

Its function is as follows. Binds directly to 16S ribosomal RNA. This chain is Small ribosomal subunit protein bS20, found in Thermosipho africanus (strain TCF52B).